Reading from the N-terminus, the 204-residue chain is FMN-dependent NADH:quinone oxidoreductase (204 aa).

FMN is bound by residues S10, 15–17, and 139–142; these read SLS and TSGG.

It belongs to the azoreductase type 1 family. In terms of assembly, homodimer. FMN is required as a cofactor.

It catalyses the reaction 2 a quinone + NADH + H(+) = 2 a 1,4-benzosemiquinone + NAD(+). It carries out the reaction N,N-dimethyl-1,4-phenylenediamine + anthranilate + 2 NAD(+) = 2-(4-dimethylaminophenyl)diazenylbenzoate + 2 NADH + 2 H(+). Quinone reductase that provides resistance to thiol-specific stress caused by electrophilic quinones. In terms of biological role, also exhibits azoreductase activity. Catalyzes the reductive cleavage of the azo bond in aromatic azo compounds to the corresponding amines. This Rhizobium leguminosarum bv. trifolii (strain WSM2304) protein is FMN-dependent NADH:quinone oxidoreductase.